The chain runs to 783 residues: Ras and Rab interactor 1 (783 aa).

Methionine 1 is subject to N-acetylmethionine. The segment at methionine 1 to glycine 53 is disordered. A phosphoserine mark is found at serine 3 and serine 16. Tyrosine 36 bears the Phosphotyrosine; by ABL1 and ABL2 mark. The region spanning tryptophan 69–arginine 163 is the SH2 domain. 4 positions are modified to phosphoserine: serine 210, serine 258, serine 333, and serine 337. Disordered stretches follow at residues serine 250 to proline 282 and tyrosine 295 to arginine 342. The span at leucine 257–valine 269 shows a compositional bias: pro residues. The ras and 14-3-3 protein binding region stretch occupies residues glycine 294–arginine 727. Residues glycine 317–proline 334 show a composition bias toward low complexity. At serine 351 the chain carries Phosphoserine; by PKD/PRKD1. Residues leucine 456–leucine 598 enclose the VPS9 domain. A phosphoserine mark is found at serine 609 and serine 611. Positions phenylalanine 624–tryptophan 706 constitute a Ras-associating domain. Omega-N-methylarginine is present on arginine 692. Positions threonine 709–glutamate 783 are disordered. A compositionally biased stretch (low complexity) spans glutamine 762–glutamate 772.

It belongs to the RIN (Ras interaction/interference) family. As to quaternary structure, interacts with the GTP-bound form of Ras proteins (NRAS, HRAS and KRAS). This interaction prevents the association between RAF1 and Ras. Interacts with 14-3-3 proteins YWHAB, YWHAE and YWHAZ when phosphorylated on Ser-351. Interacts with the SH3 domain of ABL1 and ABL2. Interacts with RAB5A. The interaction with Ras is probably regulated and antagonized by the interaction with 14-3-3 proteins. The interaction with 14-3-3 proteins is regulated by phosphorylation on Ser-351. In terms of processing, phosphorylated on tyrosine residues by ABL1 and ABL2. Phosphorylation at Ser-351 by PRKD1 induces interaction with 14-3-3 proteins. As to expression, expressed in all tissues examined with high levels in brain, placenta and pancreas.

It localises to the cytoplasm. It is found in the membrane. The protein resides in the cytoskeleton. Functionally, ras effector protein, which may serve as an inhibitory modulator of neuronal plasticity in aversive memory formation. Can affect Ras signaling at different levels. First, by competing with RAF1 protein for binding to activated Ras. Second, by enhancing signaling from ABL1 and ABL2, which regulate cytoskeletal remodeling. Third, by activating RAB5A, possibly by functioning as a guanine nucleotide exchange factor (GEF) for RAB5A, by exchanging bound GDP for free GTP, and facilitating Ras-activated receptor endocytosis. This chain is Ras and Rab interactor 1 (RIN1), found in Homo sapiens (Human).